We begin with the raw amino-acid sequence, 118 residues long: Basic phospholipase A2 CM-III (118 aa).

Disulfide bonds link Cys-11/Cys-70, Cys-26/Cys-117, Cys-28/Cys-44, Cys-43/Cys-98, Cys-50/Cys-91, Cys-59/Cys-84, and Cys-77/Cys-89. The Ca(2+) site is built by Tyr-27, Gly-29, and Gly-31. The active site involves His-47. Asp-48 provides a ligand contact to Ca(2+). The Coagulation factor Xa binding motif motif lies at 52 to 69; the sequence is EKAGKMGCWPYFTLYKYK. Asp-92 is an active-site residue.

This sequence belongs to the phospholipase A2 family. Group I subfamily. D49 sub-subfamily. Ca(2+) serves as cofactor. Expressed by the venom gland.

It is found in the secreted. It catalyses the reaction a 1,2-diacyl-sn-glycero-3-phosphocholine + H2O = a 1-acyl-sn-glycero-3-phosphocholine + a fatty acid + H(+). Its function is as follows. Snake venom phospholipase A2 (PLA2) that shows several activities. It shows strong anticoagulant activity, probably by binding to coagulation factor Xa (F10) and inhibiting the formation of the prothrombinase complex, shows direct hemolytic action, causes neuromuscular blockade with a gradual contracture and a decreased sensitivity to ACh and KCl, abolishes twitches evoked by indirect stimulation earlier than those by direct stimulation (in the mouse phrenic nerve-diaphragm preparation), and causes myonecrosis when injected intramuscularly. PLA2 catalyzes the calcium-dependent hydrolysis of the 2-acyl groups in 3-sn-phosphoglycerides. This Naja mossambica (Mozambique spitting cobra) protein is Basic phospholipase A2 CM-III.